A 548-amino-acid chain; its full sequence is Tau-cadinol synthase (548 aa).

D303 and D307 together coordinate Mg(2+). Substrate-binding residues include D303, D307, and R443. The short motif at 303-307 (DDTYD) is the DDXXD motif element.

The protein belongs to the terpene synthase family. Monomer. Requires Mg(2+) as cofactor. The cofactor is Mn(2+). As to expression, constitutively expressed in aerial tissues, but barely observed in roots.

Its subcellular location is the cytoplasm. The enzyme catalyses (2E,6E)-farnesyl diphosphate + H2O = tau-cadinol + diphosphate. It participates in secondary metabolite biosynthesis; terpenoid biosynthesis. Sesquiterpene synthase that catalyzes the formation of a blend of sesquiterpenes and sesquiterpenoid alcohols. Converts farnesyl diphosphate to tau-cadinol. In Zea mays (Maize), this protein is Tau-cadinol synthase.